The primary structure comprises 430 residues: Divergent protein kinase domain 2A (430 aa).

A signal peptide spans 1–35 (MWRLVPLKLGRLSRALKLAALGSLLVLMLLHSPSL).

The protein belongs to the DIPK family. As to expression, expressed in heart, brain, liver, spleen, kidney, lung, thymus, testis, ovary and muscle.

Its subcellular location is the golgi apparatus. It is found in the cytoplasmic vesicle. The protein resides in the COPI-coated vesicle. The protein localises to the secreted. Functionally, may play a role in cardiomyocyte proliferation through paracrine signaling and activation of the PI3-kinase signaling cascade. The sequence is that of Divergent protein kinase domain 2A (Dipk2a) from Mus musculus (Mouse).